The following is a 122-amino-acid chain: Large ribosomal subunit protein uL14 (122 aa).

The protein belongs to the universal ribosomal protein uL14 family. Part of the 50S ribosomal subunit. Forms a cluster with proteins L3 and L19. In the 70S ribosome, L14 and L19 interact and together make contacts with the 16S rRNA in bridges B5 and B8.

Its function is as follows. Binds to 23S rRNA. Forms part of two intersubunit bridges in the 70S ribosome. This is Large ribosomal subunit protein uL14 from Allorhizobium ampelinum (strain ATCC BAA-846 / DSM 112012 / S4) (Agrobacterium vitis (strain S4)).